Here is a 176-residue protein sequence, read N- to C-terminus: RNA pyrophosphohydrolase (176 aa).

The region spanning 6-149 is the Nudix hydrolase domain; sequence GYRPNVGIVI…KRDVYRRVMK (144 aa). The short motif at 38–59 is the Nudix box element; sequence GGINPGESAEQAMYRELFEEVG.

Belongs to the Nudix hydrolase family. RppH subfamily. The cofactor is a divalent metal cation.

Accelerates the degradation of transcripts by removing pyrophosphate from the 5'-end of triphosphorylated RNA, leading to a more labile monophosphorylated state that can stimulate subsequent ribonuclease cleavage. In Escherichia fergusonii (strain ATCC 35469 / DSM 13698 / CCUG 18766 / IAM 14443 / JCM 21226 / LMG 7866 / NBRC 102419 / NCTC 12128 / CDC 0568-73), this protein is RNA pyrophosphohydrolase.